The chain runs to 418 residues: UDP-N-acetylglucosamine 1-carboxyvinyltransferase (418 aa).

Phosphoenolpyruvate is bound at residue 22–23 (KN). R92 is a UDP-N-acetyl-alpha-D-glucosamine binding site. C116 functions as the Proton donor in the catalytic mechanism. Position 116 is a 2-(S-cysteinyl)pyruvic acid O-phosphothioketal (C116). UDP-N-acetyl-alpha-D-glucosamine is bound by residues 121–125 (RPVDL), D305, and I327.

This sequence belongs to the EPSP synthase family. MurA subfamily.

The protein localises to the cytoplasm. The enzyme catalyses phosphoenolpyruvate + UDP-N-acetyl-alpha-D-glucosamine = UDP-N-acetyl-3-O-(1-carboxyvinyl)-alpha-D-glucosamine + phosphate. It functions in the pathway cell wall biogenesis; peptidoglycan biosynthesis. Cell wall formation. Adds enolpyruvyl to UDP-N-acetylglucosamine. The protein is UDP-N-acetylglucosamine 1-carboxyvinyltransferase of Acidiphilium cryptum (strain JF-5).